We begin with the raw amino-acid sequence, 84 residues long: MITFQWLIVRVVALFISLTILIDIEMFVVMLSFLIIHISIGLKAIIHDYIHFQKIKLMLLILLRVSAIEISRSFRTFYIIIKNT.

Topologically, residues 1-3 (MIT) are mitochondrial matrix. The chain crosses the membrane as a helical span at residues 4–24 (FQWLIVRVVALFISLTILIDI). At 25 to 31 (EMFVVML) the chain is on the mitochondrial intermembrane side. A helical transmembrane segment spans residues 32-52 (SFLIIHISIGLKAIIHDYIHF). Residue H37 participates in heme binding. Residue Y49 participates in a ubiquinone binding. Topologically, residues 53-58 (QKIKLM) are mitochondrial matrix. Residues 59–81 (LLILLRVSAIEISRSFRTFYIII) form a helical membrane-spanning segment. The Mitochondrial intermembrane portion of the chain corresponds to 82 to 84 (KNT).

As to quaternary structure, part of an enzyme complex containing four subunits: a flavoprotein, an iron-sulfur protein, plus two membrane-anchoring proteins. It depends on heme as a cofactor.

The protein resides in the mitochondrion inner membrane. The protein operates within carbohydrate metabolism; tricarboxylic acid cycle. In terms of biological role, membrane-anchoring subunit of succinate dehydrogenase (SDH). In Chondrus crispus (Carrageen Irish moss), this protein is Succinate dehydrogenase membrane anchor subunit (SDH4).